The following is a 212-amino-acid chain: Probable chemoreceptor glutamine deamidase CheD (212 aa).

Belongs to the CheD family.

It carries out the reaction L-glutaminyl-[protein] + H2O = L-glutamyl-[protein] + NH4(+). Its function is as follows. Probably deamidates glutamine residues to glutamate on methyl-accepting chemotaxis receptors (MCPs), playing an important role in chemotaxis. The polypeptide is Probable chemoreceptor glutamine deamidase CheD (Bordetella parapertussis (strain 12822 / ATCC BAA-587 / NCTC 13253)).